We begin with the raw amino-acid sequence, 62 residues long: Large ribosomal subunit protein uL30 (62 aa).

The protein belongs to the universal ribosomal protein uL30 family. In terms of assembly, part of the 50S ribosomal subunit.

The sequence is that of Large ribosomal subunit protein uL30 from Beutenbergia cavernae (strain ATCC BAA-8 / DSM 12333 / CCUG 43141 / JCM 11478 / NBRC 16432 / NCIMB 13614 / HKI 0122).